A 467-amino-acid polypeptide reads, in one-letter code: Transcriptional regulator of yeast form adherence 6 (467 aa).

Residues 43–52 (NTSDAGSIPT) show a composition bias toward polar residues. 5 disordered regions span residues 43–83 (NTSD…NIDS), 128–149 (GSSGGSATPTSSTKKASTNSNN), 245–275 (ESPETIIEENEPVSETSSTNNTTTLHYSNSS), 312–365 (NNQL…SGSK), and 390–439 (STLN…DNDR). In terms of domain architecture, bHLH spans 92 to 173 (ETKQLHSIIE…KSSVEYILYL (82 aa)). 2 stretches are compositionally biased toward low complexity: residues 257 to 275 (VSETSSTNNTTTLHYSNSS) and 312 to 322 (NNQLNNRKNSN). Polar residues predominate over residues 323 to 338 (PISPQTVCIKSQNPSP). Positions 345-365 (SSLSTSIVNSPSSSSSLSGSK) are enriched in low complexity. Residues 417–432 (GSANTETVNSGSASSD) are compositionally biased toward polar residues.

It is found in the nucleus. Its function is as follows. Transcription factor required for yeast cell adherence to silicone substrate. The polypeptide is Transcriptional regulator of yeast form adherence 6 (TRY6) (Candida albicans (strain SC5314 / ATCC MYA-2876) (Yeast)).